A 685-amino-acid polypeptide reads, in one-letter code: Twinkle mtDNA helicase (685 aa).

Residues 1–31 (MWLLLRRAYPLRILLPLRGEWVGRRGLPRSL) constitute a mitochondrion transit peptide. Residues 1-122 (MWLLLRRAYP…LCMTSLAEGS (122 aa)) are contributes to single strand DNA binding activity. Positions 54-214 (PVTTTEIRQY…LVFPWFTPGS (161 aa)) are N-terminal region (NTR). Positions 122–373 (SWEDLQASVE…WHKSIVSFRQ (252 aa)) are required for hexamers formation and DNA helicase activity. Residues 215-335 (SGLRGLKLLG…LNPKRCSLVR (121 aa)) form a primase-like domain region. One can recognise an SF4 helicase domain in the interval 385–636 (VEQAAGVRWS…LTFSIPPKSK (252 aa)). The segment at 406 to 591 (HRKGELTVFT…QEADNVLILQ (186 aa)) is maybe required for stable oligomeric structure. Residue 416–423 (GPTGSGKT) participates in ATP binding. Positions 454 to 482 (RVMLTQFAVTRLEEQLDKYEEWADRFEDL) form a coiled coil. Residues 641-685 (KIKDDNGLVAKKSSSGKKGAAHQNPEICLGQDPSPAQPDTSKSSG) form a might negatively regulate ATPase activity region. A disordered region spans residues 642-685 (IKDDNGLVAKKSSSGKKGAAHQNPEICLGQDPSPAQPDTSKSSG).

In terms of assembly, homohexamer (via C-terminus), which assembles in a ring-like structure. Homoheptamer, which assembles in a ring-like structure. Homooctamer, which assembles in a ring-like structure. Oligomers may sequentially eject two monomers (octamer&gt;heptamer&gt;hexamer) upon DNA binding. Oligomerization is Mg(2+), nucleotide and DNA-independent, however, Mg(2+) and nucleotide stabilize the homohexameric form. Interacts with POLG in vitro. Interacts with LONP1. As to expression, ubiquitous with the highest levels in the liver, heart and kidneys. The skeletal muscle, brain and testis showed lower but detectable expression. Expression is coregulated with MRPL43.

The protein localises to the mitochondrion matrix. The protein resides in the mitochondrion nucleoid. Its subcellular location is the mitochondrion inner membrane. It catalyses the reaction ATP + H2O = ADP + phosphate + H(+). It carries out the reaction Couples ATP hydrolysis with the unwinding of duplex DNA at the replication fork by translocating in the 5'-3' direction. This creates two antiparallel DNA single strands (ssDNA). The leading ssDNA polymer is the template for DNA polymerase III holoenzyme which synthesizes a continuous strand.. In terms of biological role, mitochondrial helicase involved in mtDNA replication and repair. Might have a role in mtDNA repair. Has DNA strand separation activity needed to form a processive replication fork for leading strand synthesis which is catalyzed by the formation of a replisome complex with POLG and mtSDB. Preferentially unwinds DNA substrates with pre-existing 5'-and 3'- single-stranded tails but is also active on a 5'- flap substrate. Can dissociate the invading strand of immobile or mobile D-loop DNA structures irrespective of the single strand polarity of the third strand. In addition to its DNA strand separation activity, also has DNA strand annealing, DNA strand-exchange and DNA branch migration activities. This chain is Twinkle mtDNA helicase, found in Mus musculus (Mouse).